Consider the following 464-residue polypeptide: UDP-N-acetylmuramate--L-alanine ligase (464 aa).

ATP is bound at residue 117–123 (GTHGKTT).

Belongs to the MurCDEF family.

The protein resides in the cytoplasm. The catalysed reaction is UDP-N-acetyl-alpha-D-muramate + L-alanine + ATP = UDP-N-acetyl-alpha-D-muramoyl-L-alanine + ADP + phosphate + H(+). It functions in the pathway cell wall biogenesis; peptidoglycan biosynthesis. In terms of biological role, cell wall formation. The polypeptide is UDP-N-acetylmuramate--L-alanine ligase (Streptomyces avermitilis (strain ATCC 31267 / DSM 46492 / JCM 5070 / NBRC 14893 / NCIMB 12804 / NRRL 8165 / MA-4680)).